The sequence spans 195 residues: Probable DNA-directed RNA polymerase subunit delta (195 aa).

One can recognise an HTH HARE-type domain in the interval 14 to 83 (LSMIEVARAI…GDNKWGLRSW (70 aa)). Composition is skewed to acidic residues over residues 119 to 138 (GDED…DSYE) and 145 to 195 (YDDE…GEEE). Positions 119–195 (GDEDAIDYSD…SDDDAEGEEE (77 aa)) are disordered.

The protein belongs to the RpoE family. In terms of assembly, RNAP is composed of a core of 2 alpha, a beta and a beta' subunits. The core is associated with a delta subunit and one of several sigma factors.

Its function is as follows. Participates in both the initiation and recycling phases of transcription. In the presence of the delta subunit, RNAP displays an increased specificity of transcription, a decreased affinity for nucleic acids, and an increased efficiency of RNA synthesis because of enhanced recycling. This chain is Probable DNA-directed RNA polymerase subunit delta, found in Streptococcus gordonii (strain Challis / ATCC 35105 / BCRC 15272 / CH1 / DL1 / V288).